The sequence spans 98 residues: Integration host factor subunit beta (98 aa).

Residues 59 to 98 are disordered; the sequence is RTGRNPKTGESVTLPGKYVPHFKPGKEMRDRVNESIQSEG. Basic and acidic residues predominate over residues 82–91; sequence PGKEMRDRVN.

It belongs to the bacterial histone-like protein family. In terms of assembly, heterodimer of an alpha and a beta chain.

Its function is as follows. This protein is one of the two subunits of integration host factor, a specific DNA-binding protein that functions in genetic recombination as well as in transcriptional and translational control. This is Integration host factor subunit beta from Saccharophagus degradans (strain 2-40 / ATCC 43961 / DSM 17024).